A 984-amino-acid chain; its full sequence is Hyaluronate lyase (984 aa).

Polar residues-rich tracts occupy residues 1 to 12 (MKQVVDNQTQNK), 19 to 32 (DFNQ…SWSH), and 54 to 66 (IQRT…SLSS). Disordered regions lie at residues 1–32 (MKQV…SWSH) and 49–68 (DKSP…SSDK). The N-terminal stretch at 1–40 (MKQVVDNQTQNKELVKNGDFNQTNPVSGSWSHTSAREWSA) is a signal peptide. Residues Asn429, His479, and Tyr488 contribute to the active site. Residues 701–726 (TEKDAKREDTTKEFMSKHSKDAKEKT) are compositionally biased toward basic and acidic residues. The interval 701–728 (TEKDAKREDTTKEFMSKHSKDAKEKTGQ) is disordered.

The protein belongs to the polysaccharide lyase 8 family.

The protein resides in the secreted. It carries out the reaction [hyaluronan](n) = n 3-(4-deoxy-beta-D-gluc-4-enuronosyl)-N-acetyl-D-glucosamine + H2O. The sequence is that of Hyaluronate lyase from Streptococcus agalactiae serotype III (strain NEM316).